Here is a 20-residue protein sequence, read N- to C-terminus: Short cationic peptide-4b (20 aa).

Glutamate 20 is subject to Glutamic acid 1-amide.

Expressed by the venom gland.

It localises to the secreted. In Cupiennius salei (American wandering spider), this protein is Short cationic peptide-4b.